The chain runs to 632 residues: tRNA uridine 5-carboxymethylaminomethyl modification enzyme MnmG (632 aa).

14–19 contributes to the FAD binding site; the sequence is GAGHAG. Position 273–287 (273–287) interacts with NAD(+); it reads GPRYCPSFEDKIMRF.

It belongs to the MnmG family. Homodimer. Heterotetramer of two MnmE and two MnmG subunits. It depends on FAD as a cofactor.

Its subcellular location is the cytoplasm. Its function is as follows. NAD-binding protein involved in the addition of a carboxymethylaminomethyl (cmnm) group at the wobble position (U34) of certain tRNAs, forming tRNA-cmnm(5)s(2)U34. The sequence is that of tRNA uridine 5-carboxymethylaminomethyl modification enzyme MnmG from Clostridium novyi (strain NT).